The following is a 1827-amino-acid chain: Laminin subunit beta-4 (1827 aa).

An N-terminal signal peptide occupies residues 1–21; the sequence is MLLRLELSALLLLLIAAPVRL. In terms of domain architecture, Laminin N-terminal spans 26 to 266; it reads VGNSCYPNLG…ALYEMVVRGS (241 aa). An N-linked (GlcNAc...) asparagine glycan is attached at Asn-231. Intrachain disulfides connect Cys-267–Cys-276, Cys-269–Cys-297, Cys-299–Cys-308, Cys-311–Cys-331, Cys-334–Cys-343, Cys-336–Cys-361, Cys-364–Cys-373, Cys-376–Cys-394, Cys-397–Cys-410, Cys-399–Cys-417, Cys-419–Cys-428, Cys-431–Cys-446, Cys-449–Cys-463, Cys-451–Cys-470, Cys-472–Cys-481, Cys-484–Cys-498, Cys-501–Cys-513, Cys-503–Cys-520, and Cys-522–Cys-531. 4 Laminin EGF-like domains span residues 267 to 333, 334 to 396, 397 to 448, and 449 to 500; these read CFCN…VCKR, CNCH…ACIP, CDCD…GCQL, and CRCN…GCIP. The 44-residue stretch at 501 to 544 folds into the Laminin EGF-like 5; truncated domain; it reads CDCDIGGALKTECSSVDGQCKCRPNMVGQKCNDPAPGYFLAPLD. Residues 540 to 847 form the Laminin IV type B domain; it reads LAPLDFYIYE…LIGSMSAFIH (308 aa). 32 disulfides stabilise this stretch: Cys-853–Cys-865, Cys-855–Cys-872, Cys-874–Cys-883, Cys-886–Cys-898, Cys-901–Cys-913, Cys-903–Cys-920, Cys-922–Cys-931, Cys-934–Cys-944, Cys-947–Cys-956, Cys-949–Cys-963, Cys-966–Cys-975, Cys-978–Cys-992, Cys-995–Cys-1011, Cys-997–Cys-1022, Cys-1024–Cys-1033, Cys-1036–Cys-1051, Cys-1054–Cys-1068, Cys-1056–Cys-1075, Cys-1078–Cys-1087, Cys-1090–Cys-1103, Cys-1106–Cys-1126, Cys-1108–Cys-1133, Cys-1135–Cys-1144, Cys-1147–Cys-1160, Cys-1163–Cys-1175, Cys-1165–Cys-1182, Cys-1184–Cys-1193, Cys-1196–Cys-1208, Cys-1211–Cys-1223, Cys-1213–Cys-1230, Cys-1232–Cys-1241, and Cys-1244–Cys-1255. Laminin EGF-like domains lie at 853 to 900, 901 to 946, 947 to 994, 995 to 1053, 1054 to 1105, 1106 to 1162, 1163 to 1210, and 1211 to 1257; these read CNCH…GCSP, CDCD…LCRR, CQCN…PCEP, CLCP…RCKE, CCCN…DCKE, CSCD…GCQP, CNCN…QCMF, and CDCN…ACEP. Asn-1001 is a glycosylation site (N-linked (GlcNAc...) asparagine). Residues 1258-1449 are domain II; that stretch reads CHACNHLWEK…LSAANINEEV (192 aa). Coiled coils occupy residues 1294–1335 and 1385–1449; these read ELQH…EIID and NKIK…NEEV. N-linked (GlcNAc...) asparagine glycosylation is present at Asn-1329. The segment at 1450–1476 is domain alpha; sequence CGAPGDAECEKAKCGGALCGKCGGPDC. Residues 1477-1827 form a domain I region; it reads TGSLPISLNA…KVQRYNLCSP (351 aa). Asn-1485, Asn-1496, Asn-1513, Asn-1533, Asn-1599, Asn-1629, Asn-1644, Asn-1672, Asn-1686, Asn-1702, Asn-1726, Asn-1745, Asn-1750, and Asn-1761 each carry an N-linked (GlcNAc...) asparagine glycan. Coiled-coil stretches lie at residues 1485–1554 and 1584–1820; these read NASK…EKVK and DEIK…DKVQ.

In terms of assembly, laminin is a complex glycoprotein, consisting of three different polypeptide chains (alpha, beta, gamma), which are bound to each other by disulfide bonds into a cross-shaped molecule comprising one long and three short arms with globules at each end.

The protein resides in the secreted. It is found in the extracellular space. Its subcellular location is the extracellular matrix. The protein localises to the basement membrane. Its function is as follows. Binding to cells via a high affinity receptor, laminin is thought to mediate the attachment, migration and organization of cells into tissues during embryonic development by interacting with other extracellular matrix components. Positively regulates apical-basal distribution of Muller glia cells in the retina. The polypeptide is Laminin subunit beta-4 (lamb4) (Danio rerio (Zebrafish)).